The chain runs to 163 residues: Halocyanin (163 aa).

The signal sequence occupies residues 1-24 (MKDISRRRFVLGTGATVAAATLAG). Residue C25 is modified to N-acetylcysteine. A lipid anchor (S-archaeol cysteine) is attached at C25. Positions 26-38 (NGNGNGNGNGNGN) are enriched in gly residues. Residues 26–48 (NGNGNGNGNGNGNGEPDTPEGRA) form a disordered region. One can recognise a Plastocyanin-like domain in the interval 48-163 (ADQFLTDNDA…QGMYGAVIVE (116 aa)). Residues H110, C148, H151, and M156 each contribute to the Cu cation site.

The protein resides in the cell membrane. In terms of biological role, electron donor. Binds one copper ion. The sequence is that of Halocyanin (hcy) from Natronomonas pharaonis (Natronobacterium pharaonis).